We begin with the raw amino-acid sequence, 309 residues long: G-protein coupled receptor 35 (309 aa).

At 1–24 (MNGTYNTCGSSDLTWPPAIKLGFY) the chain is on the extracellular side. Asn2 carries an N-linked (GlcNAc...) asparagine glycan. Residues 25–45 (AYLGVLLVLGLLLNSLALWVF) form a helical membrane-spanning segment. The Cytoplasmic portion of the chain corresponds to 46-56 (CCRMQQWTETR). Residues 57-77 (IYMTNLAVADLCLLCTLPFVL) form a helical membrane-spanning segment. The Extracellular segment spans residues 78–90 (HSLRDTSDTPLCQ). Cysteines 89 and 162 form a disulfide. A helical membrane pass occupies residues 91-112 (LSQGIYLTNRYMSISLVTAIAV). Topologically, residues 113–135 (DRYVAVRHPLRARGLRSPRQAAA) are cytoplasmic. Residues 136–156 (VCAVLWVLVIGSLVARWLLGI) traverse the membrane as a helical segment. Residues 157-174 (QEGGFCFRSTRHNFNSMA) are Extracellular-facing. Residues 175–195 (FPLLGFYLPLAVVVFCSLKVV) traverse the membrane as a helical segment. The Cytoplasmic segment spans residues 196–218 (TALAQRPPTDVGQAEATRKAARM). A helical membrane pass occupies residues 219-239 (VWANLLVFVVCFLPLHVGLTV). The Extracellular portion of the chain corresponds to 240–258 (RLAVGWNACALLETIRRAL). A helical transmembrane segment spans residues 259–279 (YITSKLSDANCCLDAICYYYM). Topologically, residues 280–309 (AKEFQEASALAVAPSAKAHKSQDSLCVTLA) are cytoplasmic. Ser287 and Ser294 each carry phosphoserine. A phosphoserine; by GRK5 and GRK6 mark is found at Ser300 and Ser303. Thr307 is modified (phosphothreonine).

This sequence belongs to the G-protein coupled receptor 1 family. Interacts with GNA13. Interacts with ARRB2. Post-translationally, multiply phosphorylated in clusters of serines and threonines in the C-terminal tail. Phosphorylation of Ser-300 and Ser-303 is mediated by GRK5 and/or GRK6. In terms of tissue distribution, predominantly expressed in immune and gastrointestinal tissues.

It is found in the cell membrane. G-protein coupled receptor that binds to several ligands including the tryptophan metabolite kynurenic acid (KYNA), lysophosphatidic acid (LPA) or 5-hydroxyindoleacetic acid (5-HIAA) with high affinity, leading to rapid and transient activation of numerous intracellular signaling pathways. Plays a role in neutrophil recruitment to sites of inflammation and bacterial clearance through the major serotonin metabolite 5-HIAA that acts as a physiological ligand. Stimulates lipid metabolism, thermogenic, and anti-inflammatory gene expression in adipose tissue once activated by kynurenic acid. In macrophages, activation by lysophosphatidic acid promotes GPR35-induced signaling with a distinct transcriptional profile characterized by TNF production associated with ERK and NF-kappa-B activation. In turn, induces chemotaxis of macrophages. The protein is G-protein coupled receptor 35 (GPR35) of Homo sapiens (Human).